The primary structure comprises 126 residues: Glycine cleavage system H protein (126 aa).

The Lipoyl-binding domain occupies 22 to 104; the sequence is TVTIGITEYA…YEKAWMVKVK (83 aa). Lysine 63 is subject to N6-lipoyllysine.

Belongs to the GcvH family. The glycine cleavage system is composed of four proteins: P, T, L and H. It depends on (R)-lipoate as a cofactor.

Its function is as follows. The glycine cleavage system catalyzes the degradation of glycine. The H protein shuttles the methylamine group of glycine from the P protein to the T protein. Is also involved in protein lipoylation via its role as an octanoyl/lipoyl carrier protein intermediate. The sequence is that of Glycine cleavage system H protein from Staphylococcus carnosus (strain TM300).